A 138-amino-acid polypeptide reads, in one-letter code: Large ribosomal subunit protein bL17 (138 aa).

It belongs to the bacterial ribosomal protein bL17 family. Part of the 50S ribosomal subunit. Contacts protein L32.

The chain is Large ribosomal subunit protein bL17 from Granulibacter bethesdensis (strain ATCC BAA-1260 / CGDNIH1).